The chain runs to 199 residues: Adenine phosphoribosyltransferase (199 aa).

The protein belongs to the purine/pyrimidine phosphoribosyltransferase family. As to quaternary structure, homodimer.

Its subcellular location is the cytoplasm. It carries out the reaction AMP + diphosphate = 5-phospho-alpha-D-ribose 1-diphosphate + adenine. The protein operates within purine metabolism; AMP biosynthesis via salvage pathway; AMP from adenine: step 1/1. Functionally, catalyzes a salvage reaction resulting in the formation of AMP, that is energically less costly than de novo synthesis. The chain is Adenine phosphoribosyltransferase from Rhodopseudomonas palustris (strain BisB18).